The following is a 393-amino-acid chain: Formate-dependent phosphoribosylglycinamide formyltransferase (393 aa).

Residues 22–23 and Glu-82 contribute to the N(1)-(5-phospho-beta-D-ribosyl)glycinamide site; that span reads EL. ATP is bound by residues Arg-114, Lys-155, 160–165, 195–198, and Glu-203; these read SSGKGQ and EGFI. The 190-residue stretch at 119-308 folds into the ATP-grasp domain; the sequence is RLAAEELDLP…QFALHARAIL (190 aa). Residues Glu-267 and Glu-279 each contribute to the Mg(2+) site. N(1)-(5-phospho-beta-D-ribosyl)glycinamide contacts are provided by residues Asp-286, Lys-356, and 363–364; that span reads RR.

The protein belongs to the PurK/PurT family. Homodimer.

It catalyses the reaction N(1)-(5-phospho-beta-D-ribosyl)glycinamide + formate + ATP = N(2)-formyl-N(1)-(5-phospho-beta-D-ribosyl)glycinamide + ADP + phosphate + H(+). It functions in the pathway purine metabolism; IMP biosynthesis via de novo pathway; N(2)-formyl-N(1)-(5-phospho-D-ribosyl)glycinamide from N(1)-(5-phospho-D-ribosyl)glycinamide (formate route): step 1/1. Its function is as follows. Involved in the de novo purine biosynthesis. Catalyzes the transfer of formate to 5-phospho-ribosyl-glycinamide (GAR), producing 5-phospho-ribosyl-N-formylglycinamide (FGAR). Formate is provided by PurU via hydrolysis of 10-formyl-tetrahydrofolate. This Pseudomonas fluorescens (strain ATCC BAA-477 / NRRL B-23932 / Pf-5) protein is Formate-dependent phosphoribosylglycinamide formyltransferase.